We begin with the raw amino-acid sequence, 327 residues long: Undecaprenyl-phosphate 4-deoxy-4-formamido-L-arabinose transferase (327 aa).

Helical transmembrane passes span leucine 236–valine 256 and valine 270–leucine 290.

The protein belongs to the glycosyltransferase 2 family.

Its subcellular location is the cell inner membrane. The enzyme catalyses UDP-4-deoxy-4-formamido-beta-L-arabinose + di-trans,octa-cis-undecaprenyl phosphate = 4-deoxy-4-formamido-alpha-L-arabinopyranosyl di-trans,octa-cis-undecaprenyl phosphate + UDP. It functions in the pathway glycolipid biosynthesis; 4-amino-4-deoxy-alpha-L-arabinose undecaprenyl phosphate biosynthesis; 4-amino-4-deoxy-alpha-L-arabinose undecaprenyl phosphate from UDP-4-deoxy-4-formamido-beta-L-arabinose and undecaprenyl phosphate: step 1/2. It participates in bacterial outer membrane biogenesis; lipopolysaccharide biosynthesis. Functionally, catalyzes the transfer of 4-deoxy-4-formamido-L-arabinose from UDP to undecaprenyl phosphate. The modified arabinose is attached to lipid A and is required for resistance to polymyxin and cationic antimicrobial peptides. This chain is Undecaprenyl-phosphate 4-deoxy-4-formamido-L-arabinose transferase, found in Klebsiella pneumoniae subsp. pneumoniae (strain ATCC 700721 / MGH 78578).